A 213-amino-acid polypeptide reads, in one-letter code: Thymidine kinase (213 aa).

ATP contacts are provided by residues 22 to 29 and 94 to 97; these read GSMFSGKT and DEAQ. Glu95 (proton acceptor) is an active-site residue. Residues Cys151, Cys154, Cys183, and Cys186 each coordinate Zn(2+). The interval 185–213 is disordered; it reads RCFQPPRPTSTSSLKAPAPAATAPRPELP. Residues 193 to 213 are compositionally biased toward low complexity; that stretch reads TSTSSLKAPAPAATAPRPELP.

This sequence belongs to the thymidine kinase family. Homotetramer.

Its subcellular location is the cytoplasm. It catalyses the reaction thymidine + ATP = dTMP + ADP + H(+). The chain is Thymidine kinase from Rhodothermus sp. (strain ITI 518).